Consider the following 86-residue polypeptide: Actinorhodin polyketide synthase acyl carrier protein (86 aa).

Residues 4 to 82 form the Carrier domain; that stretch reads LLTTDDLRRA…ELLDLINGAL (79 aa). Position 42 is an O-(pantetheine 4'-phosphoryl)serine (Ser-42).

In terms of processing, 4'-phosphopantetheine is transferred from CoA to a specific serine of the apo-ACP-like protein.

The protein operates within antibiotic biosynthesis; actinorhodin biosynthesis. In terms of biological role, acyl carrier protein. This is Actinorhodin polyketide synthase acyl carrier protein from Streptomyces coelicolor (strain ATCC BAA-471 / A3(2) / M145).